The chain runs to 210 residues: Urease accessory protein UreF (210 aa).

The protein belongs to the UreF family. As to quaternary structure, ureD, UreF and UreG form a complex that acts as a GTP-hydrolysis-dependent molecular chaperone, activating the urease apoprotein by helping to assemble the nickel containing metallocenter of UreC. The UreE protein probably delivers the nickel.

Its subcellular location is the cytoplasm. Functionally, required for maturation of urease via the functional incorporation of the urease nickel metallocenter. In Cereibacter sphaeroides (strain ATCC 17029 / ATH 2.4.9) (Rhodobacter sphaeroides), this protein is Urease accessory protein UreF.